The primary structure comprises 109 residues: Oncomodulin (109 aa).

An N-acetylserine modification is found at serine 2. EF-hand domains follow at residues 39–74 and 78–109; these read MSASQVKDVFRFIDNDQSGYLDEEELKFFLQKFESG and LTESETKSLMAAADNDGDGKIGADEFQEMVHS. Residues aspartate 52, aspartate 54, serine 56, tyrosine 58, glutamate 63, aspartate 91, aspartate 93, aspartate 95, lysine 97, and glutamate 102 each coordinate Ca(2+).

This sequence belongs to the parvalbumin family. As to expression, abundant in the organ of Corti.

Has some calmodulin-like activity with respect to enzyme activation and growth regulation. Binds two calcium ions. This is Oncomodulin (OCM) from Cavia porcellus (Guinea pig).